The chain runs to 573 residues: Myrcene synthase TPS5FN (573 aa).

Residues Arg-286, Asp-323, Asp-327, Arg-464, and Asp-467 each contribute to the (2E)-geranyl diphosphate site. The Mg(2+) site is built by Asp-323 and Asp-327. The DDXXD motif motif lies at 323–327; sequence DDIFD. Mg(2+)-binding residues include Asp-467, Thr-471, and Glu-475.

This sequence belongs to the terpene synthase family. Tpsb subfamily. Mg(2+) is required as a cofactor. The cofactor is Mn(2+). In terms of tissue distribution, expressed in glandular trichomes two to four weeks after flowering onset.

It carries out the reaction (2E)-geranyl diphosphate = beta-myrcene + diphosphate. The enzyme catalyses (2E)-geranyl diphosphate = (1R,5R)-alpha-pinene + diphosphate. It catalyses the reaction (2E)-geranyl diphosphate = sabinene + diphosphate. The catalysed reaction is (2E)-geranyl diphosphate = (4S)-limonene + diphosphate. It carries out the reaction (2E)-geranyl diphosphate = terpinolene + diphosphate. The enzyme catalyses (2E)-geranyl diphosphate = camphene + diphosphate. The protein operates within secondary metabolite biosynthesis; terpenoid biosynthesis. Its function is as follows. Involved in monoterpene (C10) olefins biosynthesis, constituants of cannabinoids and terpenoids-rich resins. Catalyzes mainly the conversion of (2E)-geranyl diphosphate to beta-myrcene, and also produces minor products such as alpha-pinene, camphene, sabinene, limonene and terpinolene. This Cannabis sativa (Hemp) protein is Myrcene synthase TPS5FN.